The primary structure comprises 161 residues: ATP synthase subunit b (161 aa).

A helical membrane pass occupies residues A10–Y29.

The protein belongs to the ATPase B chain family. In terms of assembly, F-type ATPases have 2 components, F(1) - the catalytic core - and F(0) - the membrane proton channel. F(1) has five subunits: alpha(3), beta(3), gamma(1), delta(1), epsilon(1). F(0) has three main subunits: a(1), b(2) and c(10-14). The alpha and beta chains form an alternating ring which encloses part of the gamma chain. F(1) is attached to F(0) by a central stalk formed by the gamma and epsilon chains, while a peripheral stalk is formed by the delta and b chains.

It localises to the cell inner membrane. Functionally, f(1)F(0) ATP synthase produces ATP from ADP in the presence of a proton or sodium gradient. F-type ATPases consist of two structural domains, F(1) containing the extramembraneous catalytic core and F(0) containing the membrane proton channel, linked together by a central stalk and a peripheral stalk. During catalysis, ATP synthesis in the catalytic domain of F(1) is coupled via a rotary mechanism of the central stalk subunits to proton translocation. Component of the F(0) channel, it forms part of the peripheral stalk, linking F(1) to F(0). In Fervidobacterium nodosum (strain ATCC 35602 / DSM 5306 / Rt17-B1), this protein is ATP synthase subunit b.